Reading from the N-terminus, the 591-residue chain is Vomeromodulin (591 aa).

An N-terminal signal peptide occupies residues 1 to 18 (MWVLQALAIMLSIQAGTL). Residues 151-172 (NEGNGDSSKPSSGSKATGGLGQ) are disordered. Residues Asn421 and Asn516 are each glycosylated (N-linked (GlcNAc...) asparagine).

N-glycosylated. The N-glycans consist mainly of complex sialylated and fucosylated biantennary structures. In terms of tissue distribution, expressed in lung. Not detected in other tissues tested (at protein level).

Its subcellular location is the secreted. The polypeptide is Vomeromodulin (Mus musculus (Mouse)).